The chain runs to 195 residues: Glycine-rich protein A3 (195 aa).

Disordered regions lie at residues 23 to 103 and 159 to 182; these read AGGG…GVAG and VMES…GSNL. Residues 47-77 show a composition bias toward gly residues; that stretch reads PAGGGYPPQGYPPAGGGYPPQGYPPAGGGYP. Low complexity predominate over residues 82-94; sequence PPAGHHSGSSAPH. The segment covering 163-175 has biased composition (basic and acidic residues); that stretch reads LSRESTGRARSTD.

This is Glycine-rich protein A3 from Daucus carota (Wild carrot).